The primary structure comprises 240 residues: Phosphatidylserine decarboxylase proenzyme (240 aa).

Ser205 acts as the Schiff-base intermediate with substrate; via pyruvic acid in catalysis. Ser205 carries the pyruvic acid (Ser); by autocatalysis modification.

This sequence belongs to the phosphatidylserine decarboxylase family. PSD-A subfamily. As to quaternary structure, heterodimer of a large membrane-associated beta subunit and a small pyruvoyl-containing alpha subunit. It depends on pyruvate as a cofactor. Post-translationally, is synthesized initially as an inactive proenzyme. Formation of the active enzyme involves a self-maturation process in which the active site pyruvoyl group is generated from an internal serine residue via an autocatalytic post-translational modification. Two non-identical subunits are generated from the proenzyme in this reaction, and the pyruvate is formed at the N-terminus of the alpha chain, which is derived from the carboxyl end of the proenzyme. The post-translation cleavage follows an unusual pathway, termed non-hydrolytic serinolysis, in which the side chain hydroxyl group of the serine supplies its oxygen atom to form the C-terminus of the beta chain, while the remainder of the serine residue undergoes an oxidative deamination to produce ammonia and the pyruvoyl prosthetic group on the alpha chain.

It is found in the cell membrane. It catalyses the reaction a 1,2-diacyl-sn-glycero-3-phospho-L-serine + H(+) = a 1,2-diacyl-sn-glycero-3-phosphoethanolamine + CO2. It functions in the pathway phospholipid metabolism; phosphatidylethanolamine biosynthesis; phosphatidylethanolamine from CDP-diacylglycerol: step 2/2. In terms of biological role, catalyzes the formation of phosphatidylethanolamine (PtdEtn) from phosphatidylserine (PtdSer). This is Phosphatidylserine decarboxylase proenzyme from Rhodopirellula baltica (strain DSM 10527 / NCIMB 13988 / SH1).